A 343-amino-acid polypeptide reads, in one-letter code: Galactoside alpha-(1,2)-fucosyltransferase 2 (343 aa).

The Cytoplasmic portion of the chain corresponds to 1–14 (MLVVQMPFSFPMAH). A helical; Signal-anchor for type II membrane protein membrane pass occupies residues 15–28 (FILFVFTVSTIFHV). The Lumenal segment spans residues 29–343 (QQRLAKIQAM…AADLSPLLKH (315 aa)). N-linked (GlcNAc...) asparagine glycans are attached at residues Asn-188, Asn-282, and Asn-308.

The protein belongs to the glycosyltransferase 11 family.

The protein resides in the golgi apparatus. It localises to the golgi stack membrane. It catalyses the reaction a beta-D-galactosyl-(1-&gt;3)-N-acetyl-beta-D-glucosaminyl derivative + GDP-beta-L-fucose = an alpha-L-Fuc-(1-&gt;2)-beta-D-Gal-(1-&gt;3)-beta-D-GlcNAc derivative + GDP + H(+). It carries out the reaction a beta-D-galactosyl-(1-&gt;4)-N-acetyl-beta-D-glucosaminyl derivative + GDP-beta-L-fucose = an alpha-L-Fuc-(1-&gt;2)-beta-D-Gal-(1-&gt;4)-beta-D-GlcNAc derivative + GDP + H(+). The catalysed reaction is a neolactoside nLc4Cer + GDP-beta-L-fucose = a neolactoside IV(2)-alpha-Fuc-nLc4Cer + GDP + H(+). The enzyme catalyses a neolactoside nLc4Cer(d18:1(4E)) + GDP-beta-L-fucose = a neolactoside IV(2)-alpha-Fuc-nLc4Cer(d18:1(4E)) + GDP + H(+). It catalyses the reaction a ganglioside GM1 + GDP-beta-L-fucose = a ganglioside Fuc-GM1 + GDP + H(+). It carries out the reaction a ganglioside GA1 + GDP-beta-L-fucose = a ganglioside Fuc-GA1 + GDP + H(+). The catalysed reaction is Lc4Cer + GDP-beta-L-fucose = alpha-L-fucosyl-(1-&gt;2)-beta-D-galactosyl-(1-&gt;3)-N-acetyl-beta-D-glucosaminyl-(1-&gt;3)-beta-D-galactosyl-(1-&gt;4)-beta-D-glucosyl-(1&lt;-&gt;1')-ceramide + GDP + H(+). The enzyme catalyses a beta-D-Gal-(1-&gt;3)-beta-D-GlcNAc-(1-&gt;3)-beta-D-Gal-(1-&gt;4)-beta-D-Glc-(1&lt;-&gt;1')-Cer(d18:1(4E)) + GDP-beta-L-fucose = alpha-L-fucosyl-(1-&gt;2)- beta-D-galactosyl-(1-&gt;3)-N-acetyl-beta-D-glucosaminyl-(1-&gt;3)-beta-D-galactosyl-(1-&gt;4)-beta-D-glucosyl-(1&lt;-&gt;1')-N-acylsphing-4-enine + GDP + H(+). It catalyses the reaction a ganglioside GD1b + GDP-beta-L-fucose = a ganglioside Fuc-GD1b + GDP + H(+). It carries out the reaction a ganglioside GM1 (d18:1(4E)) + GDP-beta-L-fucose = a ganglioside Fuc-GM1 (d18:1(4E)) + GDP + H(+). The catalysed reaction is a globoside GalGb4Cer (d18:1(4E)) + GDP-beta-L-fucose = a globoside Globo-H (d18:1(4E)) + GDP + H(+). The enzyme catalyses a lactoside III(4)-a-Fuc-Lc4Cer + GDP-beta-L-fucose = a lactoside IV(2),III(4)-a-[Fuc]2-Lc4Cer + GDP + H(+). It catalyses the reaction beta-D-galactosyl-(1-&gt;3)-N-acetyl-D-galactosamine + GDP-beta-L-fucose = alpha-L-fucosyl-(1-&gt;2)-beta-D-galactosyl-(1-&gt;3)-N-acetyl-D-galactosamine + GDP + H(+). It participates in protein modification; protein glycosylation. In terms of biological role, catalyzes the transfer of L-fucose, from a guanosine diphosphate-beta-L-fucose, to the terminal galactose on both O- and N-linked glycans chains of cell surface glycoproteins and glycolipids and the resulting epitope regulates several processes such as cell-cell interaction including host-microbe interaction, cell surface expression and cell proliferation. Preferentially fucosylates gangliosides GA1 and GM1 in the antrum, cecum and colon and in the female reproductive organs. Fucosylated host glycoproteins or glycolipids mediate interaction with intestinal microbiota influencing its composition. Creates a soluble precursor oligosaccharide FuC-alpha ((1,2)Galbeta-) called the H antigen which is an essential substrate for the final step in the soluble ABO blood group antigen synthesis pathway. The polypeptide is Galactoside alpha-(1,2)-fucosyltransferase 2 (Gorilla gorilla gorilla (Western lowland gorilla)).